A 353-amino-acid polypeptide reads, in one-letter code: MAATKRKRRGGFAVQAKKPKRNEKDAEPPAKRHATAEEVEEEERDRIPGPVCKGKWKNKERILIFSSRGINFRTRHLMQDLRMLMPHSKADTKMDRKDKLFVINEVCEMKNCNKCIYFEAKKKQDLYMWLSNSPHGPSAKFLVQNIHTLAELKMTGNCLKGSRPLLSFDPAFDELPHYALLKELLIQILSTPRYHPKSQPFVDHVFTFTILDNRIWFRNFQIIEEDAALVEIGPRFVLNLIKIFQGSFGGPTLYENPHYQSPNMHRRVTRSITAAKYREKQQVKDVQKLRKKEPKTLLPHDPTADVFVTPAEEKPIEIQWVKPEPKVDLKARKKRIYKRQRKMKQRMDSGKTK.

Basic residues predominate over residues 1-10; sequence MAATKRKRRG. A disordered region spans residues 1 to 46; that stretch reads MAATKRKRRGGFAVQAKKPKRNEKDAEPPAKRHATAEEVEEEERDR. The span at 22-36 shows a compositional bias: basic and acidic residues; the sequence is NEKDAEPPAKRHATA. One can recognise a Brix domain in the interval 60-249; the sequence is ERILIFSSRG…LIKIFQGSFG (190 aa). Residue Lys160 forms a Glycyl lysine isopeptide (Lys-Gly) (interchain with G-Cter in SUMO2) linkage. A Phosphoserine modification is found at Ser261. Lys276 is modified (N6-acetyllysine). Glycyl lysine isopeptide (Lys-Gly) (interchain with G-Cter in SUMO2) cross-links involve residues Lys314 and Lys322.

This sequence belongs to the BRX1 family.

The protein localises to the nucleus. The protein resides in the nucleolus. Its function is as follows. Required for biogenesis of the 60S ribosomal subunit. The chain is Ribosome biogenesis protein BRX1 homolog (BRIX1) from Pongo abelii (Sumatran orangutan).